An 89-amino-acid polypeptide reads, in one-letter code: UPF0297 protein SMU_2079c (89 aa).

It belongs to the UPF0297 family.

In Streptococcus mutans serotype c (strain ATCC 700610 / UA159), this protein is UPF0297 protein SMU_2079c.